The chain runs to 346 residues: DNA primase small subunit PriS (346 aa).

Residues Asp-95 and Asp-97 contribute to the active site. Zn(2+) contacts are provided by Cys-106, His-108, Cys-114, and Cys-117. Residues 106–117 carry the Zinc knuckle motif motif; it reads CEHEPGTVCPIC. Asp-280 is an active-site residue.

This sequence belongs to the eukaryotic-type primase small subunit family. Heterodimer of a small subunit (PriS) and a large subunit (PriL). Requires Mg(2+) as cofactor. The cofactor is Mn(2+).

Functionally, catalytic subunit of DNA primase, an RNA polymerase that catalyzes the synthesis of short RNA molecules used as primers for DNA polymerase during DNA replication. The small subunit contains the primase catalytic core and has DNA synthesis activity on its own. Binding to the large subunit stabilizes and modulates the activity, increasing the rate of DNA synthesis while decreasing the length of the DNA fragments, and conferring RNA synthesis capability. The DNA polymerase activity may enable DNA primase to also catalyze primer extension after primer synthesis. May also play a role in DNA repair. The protein is DNA primase small subunit PriS of Pyrococcus horikoshii (strain ATCC 700860 / DSM 12428 / JCM 9974 / NBRC 100139 / OT-3).